A 335-amino-acid polypeptide reads, in one-letter code: MGHPLLLPLLLLLHTCVPASWGLRCMQCKSNGDCRVEECALGQDLCRTTIVRMWEEGEELELVEKSCTHSEKTNRTMSYRTGLKITSLTEVVCGLDLCNQGNSGRAVTFSRSRYLECISCGSSDMSCERGRHQSLQCRSPEEQCLDMVTHWIQEGEEGRPKDDRHLRGCGYLPGCPGSNGFHNNDTFHFLKCCNTTKCNEGPILELENLPQNGHQCYSCKGNSTHGCSSEETFLIDCRGPMNQCLVATGTYEPKNQSYMVRGCVTASMCQRAHLGDAFSMNHINVFCCTESGCNHPDLDVQYRKGAAPQPGPAHLSLTITLLMTARLWGGTLLWT.

The signal sequence occupies residues 1–22; the sequence is MGHPLLLPLLLLLHTCVPASWG. UPAR/Ly6 domains follow at residues 23-114, 115-213, and 214-305; these read LRCM…RSRY, LECI…PQNG, and HQCY…YRKG. Disulfide bonds link C25-C46, C28-C34, and C39-C67. An N-linked (GlcNAc...) asparagine glycan is attached at N74. Cystine bridges form between C93–C98, C117–C144, C120–C127, C137–C169, C175–C192, C193–C198, C216–C244, C219–C227, C237–C263, C269–C287, and C288–C293. N-linked (GlcNAc...) asparagine glycans are attached at residues N184, N194, N222, and N255. G305 carries GPI-anchor amidated glycine lipidation. Residues 306–335 constitute a propeptide, removed in mature form; that stretch reads AAPQPGPAHLSLTITLLMTARLWGGTLLWT.

In terms of assembly, monomer. Interacts (via the UPAR/Ly6 domains) with SRPX2. Interacts with MRC2. Interacts with FAP (seprase); the interaction occurs at the cell surface of invadopodia membrane. Interacts with SORL1 (via N-terminal ectodomain); this interaction decreases PLAUR internalization. The ternary complex composed of PLAUR-PLAU-SERPINE1 also interacts with SORL1.

The protein resides in the cell membrane. The protein localises to the cell projection. It localises to the invadopodium membrane. Its function is as follows. Acts as a receptor for urokinase plasminogen activator. Plays a role in localizing and promoting plasmin formation. Mediates the proteolysis-independent signal transduction activation effects of U-PA. It is subject to negative-feedback regulation by U-PA which cleaves it into an inactive form. The protein is Urokinase plasminogen activator surface receptor (PLAUR) of Chlorocebus aethiops (Green monkey).